A 141-amino-acid chain; its full sequence is Nucleoside diphosphate kinase (141 aa).

6 residues coordinate ATP: Lys9, Phe57, Arg85, Thr91, Arg102, and Asn112. Catalysis depends on His115, which acts as the Pros-phosphohistidine intermediate.

Belongs to the NDK family. Homotetramer. Mg(2+) serves as cofactor.

Its subcellular location is the cytoplasm. The catalysed reaction is a 2'-deoxyribonucleoside 5'-diphosphate + ATP = a 2'-deoxyribonucleoside 5'-triphosphate + ADP. It catalyses the reaction a ribonucleoside 5'-diphosphate + ATP = a ribonucleoside 5'-triphosphate + ADP. Its function is as follows. Major role in the synthesis of nucleoside triphosphates other than ATP. The ATP gamma phosphate is transferred to the NDP beta phosphate via a ping-pong mechanism, using a phosphorylated active-site intermediate. The protein is Nucleoside diphosphate kinase of Chlamydia caviae (strain ATCC VR-813 / DSM 19441 / 03DC25 / GPIC) (Chlamydophila caviae).